Consider the following 217-residue polypeptide: Adenylate kinase (217 aa).

ATP is bound at residue Gly10–Thr15. The segment at Ser30–Val59 is NMP. AMP contacts are provided by residues Thr31, Arg36, Ala57–Val59, Gly85–Arg88, and Gln92. An LID region spans residues Ser126–Asp163. Residue Arg127 coordinates ATP. Positions 130 and 133 each coordinate Zn(2+). Ile136–Tyr137 lines the ATP pocket. Positions 150 and 153 each coordinate Zn(2+). AMP contacts are provided by Arg160 and Arg171. Arg199 is a binding site for ATP.

This sequence belongs to the adenylate kinase family. Monomer.

It is found in the cytoplasm. It carries out the reaction AMP + ATP = 2 ADP. It functions in the pathway purine metabolism; AMP biosynthesis via salvage pathway; AMP from ADP: step 1/1. Its function is as follows. Catalyzes the reversible transfer of the terminal phosphate group between ATP and AMP. Plays an important role in cellular energy homeostasis and in adenine nucleotide metabolism. This chain is Adenylate kinase, found in Pseudothermotoga lettingae (strain ATCC BAA-301 / DSM 14385 / NBRC 107922 / TMO) (Thermotoga lettingae).